The following is a 599-amino-acid chain: Beta-myrcene synthase, chloroplastic (599 aa).

Residues 1-34 (MWSTISISMNVAILKKPLNFLHNSNNKASNPRCV) constitute a chloroplast transit peptide. 5 residues coordinate Mg(2+): D352, D356, D496, T500, and E504. The DDXXD motif signature appears at 352 to 356 (DDVYD).

The protein belongs to the terpene synthase family. Requires Mg(2+) as cofactor. Mn(2+) is required as a cofactor.

The protein resides in the plastid. The protein localises to the chloroplast. The enzyme catalyses (2E)-geranyl diphosphate = beta-myrcene + diphosphate. The protein operates within secondary metabolite biosynthesis; terpenoid biosynthesis. Its function is as follows. Monoterpene synthase that catalyzes the formation of beta-myrcene from geranyl diphosphate. The protein is Beta-myrcene synthase, chloroplastic (MYS) of Ocimum basilicum (Sweet basil).